We begin with the raw amino-acid sequence, 418 residues long: MIFDKGNVEDFDKELWDAIHAEEERQEHHIELIASENMVSKAVMAAQGSVLTNKYAEGYPGNRYYGGTECVDIVETLAIERAKKLFGAAFANVQAHSGSQANAAAYMALIEAGDTVLGMDLAAGGHLTHGSPVNFSGKTYHFVGYSVDTDTEMLNYEAILEQAKAVQPKLIVAGASAYSRSIDFEKFRAIADHVGAYLMVDMAHIAGLVAAGVHPSPVPYAHIVTSTTHKTLRGPRGGLILTNDEALAKKINSAVFPGLQGGPLEHVIAAKAVAFKEALDPAFKDYAQAIIDNTAAMAAVFAQDDRFRLISGGTDNHVFLVDVTKVIANGKLAQNLLDEVNITLNKNAIPFETLSPFKTSGIRIGCAAITSRGMGVKESQTIARLIIKALVNHDQETILEEVRQEVRQLTDAFPLYKK.

(6S)-5,6,7,8-tetrahydrofolate-binding positions include Leu121 and 125–127; that span reads GHL. Lys230 is subject to N6-(pyridoxal phosphate)lysine. Residue 355-357 coordinates (6S)-5,6,7,8-tetrahydrofolate; the sequence is SPF.

The protein belongs to the SHMT family. In terms of assembly, homodimer. Pyridoxal 5'-phosphate is required as a cofactor.

The protein resides in the cytoplasm. The enzyme catalyses (6R)-5,10-methylene-5,6,7,8-tetrahydrofolate + glycine + H2O = (6S)-5,6,7,8-tetrahydrofolate + L-serine. Its pathway is one-carbon metabolism; tetrahydrofolate interconversion. It functions in the pathway amino-acid biosynthesis; glycine biosynthesis; glycine from L-serine: step 1/1. In terms of biological role, catalyzes the reversible interconversion of serine and glycine with tetrahydrofolate (THF) serving as the one-carbon carrier. This reaction serves as the major source of one-carbon groups required for the biosynthesis of purines, thymidylate, methionine, and other important biomolecules. Also exhibits THF-independent aldolase activity toward beta-hydroxyamino acids, producing glycine and aldehydes, via a retro-aldol mechanism. The chain is Serine hydroxymethyltransferase from Streptococcus pyogenes serotype M1.